The primary structure comprises 311 residues: MSKFLVFGHRNPDTDAIASSYGWAHLEREVFGRDAEAVVLGTPNEETAFALDYFGVTAPRVVESAKAEGVSQVILTDHNEFQQSIADIKEVEVAAVIDHHRVANFETANPLYMRLEPVGSASSIVYRAFKENGVIPPKEVAGLLLSGLISDTLLLKSPTTHVTDPQVAAELAEIAGVNLEEYGLALLKAGTNLASKSAEELIDIDAKTFGLNGNDVRVAQVNTVDIAEVLERQAEIEAAMTAASVANGYSDFVLMITDIVNSNSEILALGSNMDKVEAAFNFKLENNHAFLAGAVSRKKQVVPQLTDAFNA.

Residues His9, Asp13, Asp15, Asp77, His99, and Asp151 each coordinate Mn(2+).

Belongs to the PPase class C family. Requires Mn(2+) as cofactor.

It localises to the cytoplasm. The catalysed reaction is diphosphate + H2O = 2 phosphate + H(+). The sequence is that of Probable manganese-dependent inorganic pyrophosphatase from Streptococcus suis (strain 98HAH33).